Consider the following 314-residue polypeptide: 4-hydroxy-3-methylbut-2-enyl diphosphate reductase (314 aa).

Residue Cys-12 coordinates [4Fe-4S] cluster. His-41 and His-74 together coordinate (2E)-4-hydroxy-3-methylbut-2-enyl diphosphate. The dimethylallyl diphosphate site is built by His-41 and His-74. Residues His-41 and His-74 each coordinate isopentenyl diphosphate. A [4Fe-4S] cluster-binding site is contributed by Cys-96. His-124 serves as a coordination point for (2E)-4-hydroxy-3-methylbut-2-enyl diphosphate. Residue His-124 participates in dimethylallyl diphosphate binding. An isopentenyl diphosphate-binding site is contributed by His-124. Glu-126 (proton donor) is an active-site residue. Residue Thr-167 coordinates (2E)-4-hydroxy-3-methylbut-2-enyl diphosphate. Cys-197 is a [4Fe-4S] cluster binding site. The (2E)-4-hydroxy-3-methylbut-2-enyl diphosphate site is built by Ser-225, Ser-226, Asn-227, and Ser-269. 4 residues coordinate dimethylallyl diphosphate: Ser-225, Ser-226, Asn-227, and Ser-269. Isopentenyl diphosphate contacts are provided by Ser-225, Ser-226, Asn-227, and Ser-269.

The protein belongs to the IspH family. [4Fe-4S] cluster serves as cofactor.

It carries out the reaction isopentenyl diphosphate + 2 oxidized [2Fe-2S]-[ferredoxin] + H2O = (2E)-4-hydroxy-3-methylbut-2-enyl diphosphate + 2 reduced [2Fe-2S]-[ferredoxin] + 2 H(+). The enzyme catalyses dimethylallyl diphosphate + 2 oxidized [2Fe-2S]-[ferredoxin] + H2O = (2E)-4-hydroxy-3-methylbut-2-enyl diphosphate + 2 reduced [2Fe-2S]-[ferredoxin] + 2 H(+). Its pathway is isoprenoid biosynthesis; dimethylallyl diphosphate biosynthesis; dimethylallyl diphosphate from (2E)-4-hydroxy-3-methylbutenyl diphosphate: step 1/1. It participates in isoprenoid biosynthesis; isopentenyl diphosphate biosynthesis via DXP pathway; isopentenyl diphosphate from 1-deoxy-D-xylulose 5-phosphate: step 6/6. In terms of biological role, catalyzes the conversion of 1-hydroxy-2-methyl-2-(E)-butenyl 4-diphosphate (HMBPP) into a mixture of isopentenyl diphosphate (IPP) and dimethylallyl diphosphate (DMAPP). Acts in the terminal step of the DOXP/MEP pathway for isoprenoid precursor biosynthesis. This is 4-hydroxy-3-methylbut-2-enyl diphosphate reductase from Haemophilus influenzae (strain 86-028NP).